Reading from the N-terminus, the 497-residue chain is Probable cytosol aminopeptidase (497 aa).

Residues lysine 265 and aspartate 270 each contribute to the Mn(2+) site. Lysine 277 is a catalytic residue. Aspartate 288, aspartate 347, and glutamate 349 together coordinate Mn(2+). Residue arginine 351 is part of the active site.

Belongs to the peptidase M17 family. Mn(2+) is required as a cofactor.

The protein localises to the cytoplasm. The enzyme catalyses Release of an N-terminal amino acid, Xaa-|-Yaa-, in which Xaa is preferably Leu, but may be other amino acids including Pro although not Arg or Lys, and Yaa may be Pro. Amino acid amides and methyl esters are also readily hydrolyzed, but rates on arylamides are exceedingly low.. It catalyses the reaction Release of an N-terminal amino acid, preferentially leucine, but not glutamic or aspartic acids.. In terms of biological role, presumably involved in the processing and regular turnover of intracellular proteins. Catalyzes the removal of unsubstituted N-terminal amino acids from various peptides. In Geobacillus thermodenitrificans (strain NG80-2), this protein is Probable cytosol aminopeptidase.